The sequence spans 441 residues: MPKGFLVKRSRKSPPVSYRVREEEEPRGESLPGWMLLATMCPTGGAPPPCSPDRATQAPCCSSPRPPPAGQFGNPDTVQQALYSPTRPVSREQRERKYLGSPVSAESFPGLGTSSEALLYPPTGTANGHHGLALLPPVSSSSSVSRSQGKRPAPEPDSKPAAMPGTGPGATSSSAPSKPPAAKKTKAIRKLTFEDEVTTSPVLGLKIKEGPVEPPRPRAASSGPRPLGEFICQLCKEEYSDPFSLAQHKCSRIVRVEYRCPECHKVFSCPANLASHRRWHKPRPPVASTAQAKEEPLSDRDTPSPGASESGSEDGLYECPRCARKFRRQAYLRKHLLSHQAAKEPEEPGVMMFPGEEQRAKSPPSLNAQECHPCPVCGETFPGKSSQERHIRLLHSSQLYPCKYCPATFYSSPGLTRHINKCHPSENRQVILLQVPVRPAC.

A compositionally biased stretch (basic residues) spans 1–12; it reads MPKGFLVKRSRK. The tract at residues 1–20 is SNAG domain; that stretch reads MPKGFLVKRSRKSPPVSYRV. Disordered stretches follow at residues 1–31, 43–189, 205–224, and 278–316; these read MPKG…GESL, TGGA…KAIR, LKIK…SSGP, and RWHK…EDGL. Positions 19–28 are enriched in basic and acidic residues; that stretch reads RVREEEEPRG. Residues 74–83 show a composition bias toward polar residues; it reads NPDTVQQALY. Residues 89–98 are compositionally biased toward basic and acidic residues; that stretch reads VSREQRERKY. 2 stretches are compositionally biased toward low complexity: residues 138–147 and 169–180; these read VSSSSSVSRS and GATSSSAPSKPP. Residues 258 to 280 form a C2H2-type 1 zinc finger; the sequence is YRCPECHKVFSCPANLASHRRWH. Basic and acidic residues predominate over residues 292 to 302; that stretch reads AKEEPLSDRDT. 3 consecutive C2H2-type zinc fingers follow at residues 317–339, 372–395, and 400–423; these read YECP…LLSH, HPCP…RLLH, and YPCK…NKCH.

It belongs to the INSM1 family.

It is found in the nucleus. Its function is as follows. May act as a transcriptional regulator. Plays a role in noradrenergic neuron, pancreatic and gastrointestinal endocrine cells differentiation during embryonic development. The polypeptide is Insulinoma-associated protein 1 (insm1) (Xenopus tropicalis (Western clawed frog)).